The following is a 48-amino-acid chain: Photosystem II reaction center protein K (48 aa).

Residues 1–11 constitute a propeptide that is removed on maturation; sequence MFLFNLEQSIG. Residues 23 to 43 traverse the membrane as a helical segment; the sequence is LVDVLPIIPLLFLLLAFVWQA.

The protein belongs to the PsbK family. PSII is composed of 1 copy each of membrane proteins PsbA, PsbB, PsbC, PsbD, PsbE, PsbF, PsbH, PsbI, PsbJ, PsbK, PsbL, PsbM, PsbT, PsbX, PsbY, PsbZ, Psb30/Ycf12, at least 3 peripheral proteins of the oxygen-evolving complex and a large number of cofactors. It forms dimeric complexes.

The protein resides in the plastid. The protein localises to the chloroplast thylakoid membrane. One of the components of the core complex of photosystem II (PSII). PSII is a light-driven water:plastoquinone oxidoreductase that uses light energy to abstract electrons from H(2)O, generating O(2) and a proton gradient subsequently used for ATP formation. It consists of a core antenna complex that captures photons, and an electron transfer chain that converts photonic excitation into a charge separation. This Lepocinclis buetschlii protein is Photosystem II reaction center protein K.